Reading from the N-terminus, the 292-residue chain is Glutathione S-transferase L2, chloroplastic (292 aa).

The transit peptide at 1–56 directs the protein to the chloroplast; the sequence is MSVGLKVSAFLHPTLALSSRDVSLSSSSSSLYLDRKILRPGSGRRWCKSRRTEPIL. In terms of domain architecture, GST N-terminal spans 79–160; it reads GSTRLYISYT…YIDTNFEGPS (82 aa). Residues 89-90, 117-118, 131-132, and 144-145 contribute to the glutathione site; these read CP, NR, KV, and ES. Residues 130–286 form the GST C-terminal domain; the sequence is NKVPALEHNN…ELVERYKRRV (157 aa).

The protein belongs to the GST superfamily. Lambda family.

The protein localises to the plastid. Its subcellular location is the chloroplast. It catalyses the reaction RX + glutathione = an S-substituted glutathione + a halide anion + H(+). Functionally, catalyzes the glutathione-dependent reduction of S-glutathionylquercetin to quercetin. In vitro, possesses glutathione-dependent thiol transferase activity toward 2-hydroxyethyl disulfide (HED). The polypeptide is Glutathione S-transferase L2, chloroplastic (GSTL2) (Arabidopsis thaliana (Mouse-ear cress)).